Reading from the N-terminus, the 712-residue chain is Testis-specific gene 10 protein (712 aa).

At S161 the chain carries Phosphoserine. The segment at 571-703 (QMTNERISMQ…SPDRDLDRSL (133 aa)) is interaction with HIF1A. The interval 673 to 699 (YHLGSMKPNTKCHSPERAHHRSPDRDL) is disordered. Residues 685-699 (HSPERAHHRSPDRDL) show a composition bias toward basic and acidic residues. Position 702 is a phosphoserine (S702).

This sequence belongs to the CEP135/TSGA10 family. Interacts with HIF1A. Processed into N-terminal 27-kDa and C-terminal 55-kDa fragments. In terms of tissue distribution, expressed in testis, predominantly in elongated spermatids (at protein level). Detected in spermatocytes only at the mRNA, but not at the protein level.

Its subcellular location is the cytoplasm. The protein localises to the cytoskeleton. It is found in the microtubule organizing center. The protein resides in the centrosome. It localises to the centriole. Plays a role in spermatogenesis. When overexpressed, prevents nuclear localization of HIF1A. In Rattus norvegicus (Rat), this protein is Testis-specific gene 10 protein (Tsga10).